A 142-amino-acid polypeptide reads, in one-letter code: MLKHKIIGLDVGSKTVGIAISDLMGWTAQGLDTLRIDEENNELGIEALVKIIKRDNVGTVVIGLPKNMNNSIGFRGEASLQYKEQLQEALPSLEIIMWDERLSTMAAERSLLEADVSRQKRKKVIDKMAAVFILQGYLDSLQ.

Belongs to the YqgF nuclease family.

It is found in the cytoplasm. Its function is as follows. Could be a nuclease involved in processing of the 5'-end of pre-16S rRNA. In Staphylococcus saprophyticus subsp. saprophyticus (strain ATCC 15305 / DSM 20229 / NCIMB 8711 / NCTC 7292 / S-41), this protein is Putative pre-16S rRNA nuclease.